The following is a 781-amino-acid chain: N-acetylneuraminate (7)9-O-acetyltransferase (781 aa).

The Cytoplasmic portion of the chain corresponds to 1 to 15 (MAVLAYNLGKREINQ). The helical transmembrane segment at 16–36 (YFSIKNAKLLAAAAVVLLTVF) threads the bilayer. Over 37–308 (HAASRHYGSS…SAPPLSVLQK (272 aa)) the chain is Lumenal. The active-site Acyl-ester intermediate is the Ser94. Residues Asn139, Asn185, and Asn239 are each glycosylated (N-linked (GlcNAc...) asparagine). Active-site residues include Asp264 and His267. Residues 309-329 (LAAAVLLVSVVCFVLLGFSSH) form a helical membrane-spanning segment. A disordered region spans residues 330–350 (RKSRPAPDVESGEEKKHPAAV). The Cytoplasmic segment spans residues 330 to 354 (RKSRPAPDVESGEEKKHPAAVGQLN). Residues 355 to 375 (PKGPLLAIGKMSLIMLYFYLC) form a helical membrane-spanning segment. Topologically, residues 376–386 (DRADIFMKEQK) are lumenal. A helical membrane pass occupies residues 387 to 407 (FYTHSAFFIPLIYIFVLGVFY). The Cytoplasmic portion of the chain corresponds to 408–430 (SENSKETKLLNREQTDEWKGWMQ). The helical transmembrane segment at 431–451 (LVILIYHISGASAFIPVYMHV) threads the bilayer. Position 452 (Arg452) is a topological domain, lumenal. The helical transmembrane segment at 453–473 (VLVAAYLFQTGYGHFSFFWLK) threads the bilayer. The Cytoplasmic portion of the chain corresponds to 474 to 477 (GDFG). A helical membrane pass occupies residues 478 to 498 (LYRVCQVLFRLNFLVVVLCLV). The Lumenal portion of the chain corresponds to 499 to 504 (MDRPYQ). The chain crosses the membrane as a helical span at residues 505–525 (FYYFVPLVTFWFAVIYATMAL). Residues 526–537 (WPQILQKQANGS) are Cytoplasmic-facing. A helical transmembrane segment spans residues 538 to 558 (AFWNLALLLKLLGLLLFIGFF). The Lumenal segment spans residues 559-595 (AYSQELFEGIFSVWPLSKLFELQGSIHEWWFRWKLDR). The chain crosses the membrane as a helical span at residues 596–616 (FAVVNGMLFAFIYLLLQKYQL). The Cytoplasmic segment spans residues 617–629 (LSEGKGEPLFSNK). Residues 630-650 (ISNCLLFVSVVSFMTYSIWAS) form a helical membrane-spanning segment. At 651 to 660 (GCKNKSECNE) the chain is on the lumenal side. Asn654 carries N-linked (GlcNAc...) asparagine glycosylation. A helical transmembrane segment spans residues 661–681 (MHPYISVILAFILIRNIPGYA). Residues 682-687 (RSLYSS) are Cytoplasmic-facing. A helical transmembrane segment spans residues 688 to 708 (FFAWFGKISLELFICQYHIWL). The Lumenal portion of the chain corresponds to 709 to 714 (AADTKG). A helical transmembrane segment spans residues 715–735 (ILVLIPGNPTLNIIVSTFIFV). Residues 736 to 756 (CVAHEISQITNDLAQVAIPKE) are Cytoplasmic-facing. Residues 757 to 777 (SGPLLKRLLGAGVFLVLVLTL) form a helical membrane-spanning segment. Residues 778–781 (SQKD) lie on the Lumenal side of the membrane.

It belongs to the PC-esterase family. CASD1 subfamily.

It localises to the golgi apparatus membrane. The enzyme catalyses CMP-N-acetyl-beta-neuraminate + acetyl-CoA = CMP-N-acetyl-9-O-acetyl-beta-neuraminate + CoA. It catalyses the reaction a ganglioside GD3 (d18:1(4E)) + acetyl-CoA = a ganglioside Ac-O-7-GD3(d18:1(4E)) + CoA. The catalysed reaction is CMP-N-acetyl-beta-neuraminate + acetyl-CoA = CMP-N-acetyl-7-O-acetyl-beta-neuraminate + CoA. Functionally, key enzyme in the biosynthesis of O-acetylated (O-Ac) sialoglycans such as gangliosides O-AcGD3 and O-AcGD2, which affect various processes such as cell-cell interactions, host-pathogen recognition. Catalyzes the transfer of an acetyl group from a donor, the acetyl-coenzyme-A molecule (acetyl-CoA), to the C7/8/9 OH-position of a sialic acid residue. The primary site of O-acetyl group transfer on sialic acid seems to depend on cell type and can be C7, from which the O-acetyl group could subsequently migrate to the C8 and then to the C9 position, or at C9 with possibility of migrating to the C8 and then to the C7 position. Together with ST8SIA1 (GD3 synthase) it increases the levels of ganglioside Ac-O-7-GD3. Can transfer the acetyl group from acetyl-CoA to free sialate (N-acetylneuraminate, Neu5Ac) in vitro, but has preferred substrate specificity for CMP-activated sialate (CMP-Neu5Ac), resulting in the formation of 9-O-acetylated CMP-Neu5Ac (CMP-Neu5,9Ac2). CMP-Neu5,9Ac2 may be used by sialyltransferases as a sialate donor for glycoconjugate acceptors such as ganglioside GD3. O-acetylation at position C9 of ganglioside GD3 can counteract the pro-apoptotic effects of the ganglioside GD3 in tumor cells. The chain is N-acetylneuraminate (7)9-O-acetyltransferase from Danio rerio (Zebrafish).